We begin with the raw amino-acid sequence, 396 residues long: MSKLDAYFGEFGGQYVPQILVPALDQLEDAFIEAQQDPAFQKEFIDLLKDYAGRPTALTLCQNLTKGTKTKLYLKREDLLHGGAHKTNQVLGQALLAKRMGKKEIIAETGAGQHGVATALACALLGLKCRVYMGAKDIERQSPNVFRMKLMGATVIPVHSGSSTLKDACNEAMRDWSATYEEAHYLLGTAAGPHPFPTIVREFQRIIGEETKVQILEKEGRLPDAVIACVGGGSNAIGMFADFIDEKDVSLIGVEPAGKGLDTKMHGAPLKHGKLGIFFGMKAPLMQDEHGQVEESYSVSAGLDFPSVGPQHAHLNAIGRAEYGSVTDDEALDAFQLLARKEGIIPALESAHALAYALKMIEAEPEKEQLLVVNLSGRGDKDIFTVHDILDAKGVL.

Lysine 86 carries the post-translational modification N6-(pyridoxal phosphate)lysine.

This sequence belongs to the TrpB family. As to quaternary structure, tetramer of two alpha and two beta chains. Pyridoxal 5'-phosphate is required as a cofactor.

The catalysed reaction is (1S,2R)-1-C-(indol-3-yl)glycerol 3-phosphate + L-serine = D-glyceraldehyde 3-phosphate + L-tryptophan + H2O. The protein operates within amino-acid biosynthesis; L-tryptophan biosynthesis; L-tryptophan from chorismate: step 5/5. Its function is as follows. The beta subunit is responsible for the synthesis of L-tryptophan from indole and L-serine. This Photobacterium profundum (strain SS9) protein is Tryptophan synthase beta chain.